A 66-amino-acid polypeptide reads, in one-letter code: Toxin Boma6c (66 aa).

Residues 2-64 (RDAYIAQNYN…VPIRIPGKCH (63 aa)) form the LCN-type CS-alpha/beta domain. 4 disulfides stabilise this stretch: C12-C63, C16-C36, C22-C46, and C26-C48.

Belongs to the long (4 C-C) scorpion toxin superfamily. Sodium channel inhibitor family. Alpha subfamily. As to expression, expressed by the venom gland.

It localises to the secreted. Functionally, alpha toxins bind voltage-independently at site-3 of sodium channels (Nav) and inhibit the inactivation of the activated channels, thereby blocking neuronal transmission. The polypeptide is Toxin Boma6c (Buthus occitanus mardochei (Moroccan scorpion)).